The chain runs to 712 residues: MASAAANNSSSAAYDAAETGGLLRRRNTTAAARGNAGEEEEEAEAVAPSVEQAFADKPVPSWREQLTVRAFVVGFLLSIMFNIIVMKLSLTTGVIPSLNVSASLLGFFLVRLWTAAIERVGFLKQPFTRQENTVIQTCVVSAYGVAFSGGFGSYLFGMSETIAKQATEANDPMNIKNPHLGWIIGFMFLVSFVGLFALVPMRKVMIVDYKLTYPSGTATAYLINGFHTPEGADLAKKQVRTLGKYFSISFLWAFFQWFYTAGDNCGFSSFPTFGLEAFKNRFYFDFSPTYVGVGMICPYIVNVSLLIGGIISWGIMWPLISKKKGSWYPETLPESSLLGLQAYKVFITIAVILGDGLYNFVKVFGYTIKGFIVMYKNKNSNTLPISDNGTPANATEEESFDDKRRNELFLKDQIPKTVAIGGYVVLAVITSGCLPLIIPQLKWYYILIAYIFAPIMAFCNAYGSGLTDWSLATTYGKLAIFVFGAWAGASHGGVLVGLAACGVMMNIVGTASDLMQDFKTGYMTLASPRSMFVSQVIGTAMGCVIAPCVFWLFYKSFNIGASDGAYPAPYTIMYRNMAILGVNGLSSLPKYCLTLCYIAFVAAFIINLIKDLVPERVAKYIPIPMAAAIPFYLGPYFAIDMFMGSVILYFWEWRNKDEAQSFGPAVASGLMCGDGLWALPQAVLSLVNVNPPLCMKFLSRAANAKVDTFLGN.

The interval 25 to 48 (RRNTTAAARGNAGEEEEEAEAVAP) is disordered. Transmembrane regions (helical) follow at residues 70 to 90 (AFVVGFLLSIMFNIIVMKLSL), 93 to 113 (GVIPSLNVSASLLGFFLVRLW), 138 to 158 (CVVSAYGVAFSGGFGSYLFGM), 180 to 200 (LGWIIGFMFLVSFVGLFALVP), 242 to 262 (LGKYFSISFLWAFFQWFYTAG), 300 to 320 (IVNVSLLIGGIISWGIMWPLI), 345 to 365 (VFITIAVILGDGLYNFVKVFG), 418 to 438 (VAIGGYVVLAVITSGCLPLII), 446 to 466 (ILIAYIFAPIMAFCNAYGSGL), 478 to 498 (LAIFVFGAWAGASHGGVLVGL), 532 to 552 (FVSQVIGTAMGCVIAPCVFWL), 593 to 613 (LTLCYIAFVAAFIINLIKDLV), 631 to 651 (FYLGPYFAIDMFMGSVILYFW), and 666 to 686 (VASGLMCGDGLWALPQAVLSL).

This sequence belongs to the YSL (TC 2.A.67.2) family.

The protein resides in the membrane. Functionally, may be involved in the transport of nicotianamine-chelated metals. This is Probable metal-nicotianamine transporter YSL11 (YSL11) from Oryza sativa subsp. japonica (Rice).